Reading from the N-terminus, the 376-residue chain is dTDP-4-amino-4,6-dideoxygalactose transaminase (376 aa).

Residue Lys-181 is modified to N6-(pyridoxal phosphate)lysine.

This sequence belongs to the DegT/DnrJ/EryC1 family. As to quaternary structure, homotetramer. Pyridoxal 5'-phosphate is required as a cofactor.

The enzyme catalyses dTDP-4-amino-4,6-dideoxy-alpha-D-galactose + 2-oxoglutarate = dTDP-4-dehydro-6-deoxy-alpha-D-glucose + L-glutamate. The protein operates within bacterial outer membrane biogenesis; enterobacterial common antigen biosynthesis. Its function is as follows. Catalyzes the synthesis of dTDP-4-amino-4,6-dideoxy-D-galactose (dTDP-Fuc4N) from dTDP-4-keto-6-deoxy-D-glucose (dTDP-D-Glc4O) and L-glutamate. The sequence is that of dTDP-4-amino-4,6-dideoxygalactose transaminase from Escherichia coli (strain K12).